Reading from the N-terminus, the 144-residue chain is Large ribosomal subunit protein uL16 (144 aa).

Basic residues predominate over residues 1–14 (MLTPKRVKHRKQHR). Positions 1–22 (MLTPKRVKHRKQHRPSLAGKAN) are disordered.

Belongs to the universal ribosomal protein uL16 family. Part of the 50S ribosomal subunit.

Functionally, binds 23S rRNA and is also seen to make contacts with the A and possibly P site tRNAs. This Syntrophomonas wolfei subsp. wolfei (strain DSM 2245B / Goettingen) protein is Large ribosomal subunit protein uL16.